The sequence spans 418 residues: Histidine--tRNA ligase (418 aa).

It belongs to the class-II aminoacyl-tRNA synthetase family.

Its subcellular location is the cytoplasm. It catalyses the reaction tRNA(His) + L-histidine + ATP = L-histidyl-tRNA(His) + AMP + diphosphate + H(+). The sequence is that of Histidine--tRNA ligase from Methanococcus maripaludis (strain C6 / ATCC BAA-1332).